The chain runs to 433 residues: Glutamate-1-semialdehyde 2,1-aminomutase (433 aa).

N6-(pyridoxal phosphate)lysine is present on Lys-271.

It belongs to the class-III pyridoxal-phosphate-dependent aminotransferase family. HemL subfamily. Homodimer. Requires pyridoxal 5'-phosphate as cofactor.

It localises to the cytoplasm. The enzyme catalyses (S)-4-amino-5-oxopentanoate = 5-aminolevulinate. Its pathway is porphyrin-containing compound metabolism; protoporphyrin-IX biosynthesis; 5-aminolevulinate from L-glutamyl-tRNA(Glu): step 2/2. It participates in porphyrin-containing compound metabolism; chlorophyll biosynthesis. The chain is Glutamate-1-semialdehyde 2,1-aminomutase from Prochlorococcus marinus (strain MIT 9215).